We begin with the raw amino-acid sequence, 528 residues long: Catalase (528 aa).

Residues 1-22 are compositionally biased toward basic and acidic residues; the sequence is MADRREKSADQMKLWKESRANQ. Residues 1–32 are disordered; the sequence is MADRREKSADQMKLWKESRANQKPDVLTTGGG. Residues histidine 75 and asparagine 148 contribute to the active site. NADP(+)-binding residues include histidine 194, serine 201, arginine 203, asparagine 213, lysine 237, tryptophan 303, histidine 305, and lysine 306. Tyrosine 358 provides a ligand contact to heme. The short motif at 525–528 is the Microbody targeting signal; atypical element; that stretch reads KANL.

This sequence belongs to the catalase family. Homotetramer. Requires heme as cofactor. NADP(+) is required as a cofactor.

It localises to the peroxisome matrix. It catalyses the reaction 2 H2O2 = O2 + 2 H2O. In terms of biological role, catalyzes the degradation of hydrogen peroxide (H(2)O(2)) generated by peroxisomal oxidases to water and oxygen, thereby protecting cells from the toxic effects of hydrogen peroxide. This chain is Catalase (cat), found in Glandirana rugosa (Japanese wrinkled frog).